A 641-amino-acid chain; its full sequence is Epithelial sodium channel subunit beta (641 aa).

At 1-50 the chain is on the cytoplasmic side; that stretch reads MHLKKYLLKGLHRLQKGPGYSYKELLVWYCNNTNTHGPKRIICEGPKKKA. A helical transmembrane segment spans residues 51 to 71; that stretch reads MWFLITLLFTSLVCWQWGVFI. The Extracellular segment spans residues 72-533; it reads RTYLSWEVSV…GGQFGFWMGG (462 aa). Intrachain disulfides connect Cys98/Cys273, Cys185/Cys190, Cys197/Cys204, Cys250/Cys257, Cys362/Cys449, Cys387/Cys445, Cys391/Cys441, Cys400/Cys427, and Cys402/Cys416. N-linked (GlcNAc...) asparagine glycosylation occurs at Asn141. Residue Asn261 is glycosylated (N-linked (GlcNAc...) asparagine). The chain crosses the membrane as a helical span at residues 534–554; it reads SVLCLIEFGEILIDFVWITII. Over 555–641 the chain is Cytoplasmic; sequence KLVAFAKSLR…IESDSEGDAI (87 aa). Residues 593–624 form a disordered region; it reads PDVARPGPDPGTYPDEQTLPIPGTPPPNYDSL. Positions 617–621 match the PY motif; recruits WW domain-containing proteins and is thereby required for ubiquitination and inhibition of the channel by NEDD4 and NEDD4L motif; that stretch reads PPPNY. 2 positions are modified to phosphoserine: Ser634 and Ser636.

It belongs to the amiloride-sensitive sodium channel (TC 1.A.6) family. SCNN1B subfamily. In terms of assembly, component of the heterotrimeric epithelial sodium channel (ENaC) composed of an alpha/SCNN1A, a beta/SCNN1B and a gamma/SCNN1G subunit. An additional delta/SCNN1D subunit can replace the alpha/SCNN1A subunit to form an alternative channel with specific properties. Interacts with WWP1 (via WW domains). Interacts with WWP2 (via WW domains); inhibits the channel. Interacts with the full-length immature form of PCSK9 (pro-PCSK9). Interacts (N-glycosylated) with BPIFA1; the interaction is direct and inhibits the proteolytic processing of SCNN1A and SCNN1G and the activation of ENaC. In terms of processing, ubiquitinated. Can be ubiquitinated at multiple sites and undergo monoubiquitination and polyubiquitination. Ubiquitination by NEDD4 or NEDD4L inhibits the ENaC channel through endocytosis, intracellular retention and degradation of its individual subunits. However, some studies could not confirm the ubiquitination of this subunit of the ENaC. Post-translationally, phosphorylated on serine and threonine residues. Aldosterone and insulin increase the basal level of phosphorylation. N-glycosylated. N-glycosylation is required for interaction with BPIFA1.

Its subcellular location is the apical cell membrane. The protein resides in the cytoplasmic vesicle membrane. It carries out the reaction Na(+)(in) = Na(+)(out). Its activity is regulated as follows. Originally identified and characterized by its inhibition by the diuretic drug amiloride. Functionally, this is one of the three pore-forming subunits of the heterotrimeric epithelial sodium channel (ENaC), a critical regulator of sodium balance and fluid homeostasis. ENaC operates in epithelial tissues, where it mediates the electrodiffusion of sodium ions from extracellular fluid through the apical membrane of cells, with water following osmotically. It plays a key role in maintaining sodium homeostasis through electrogenic sodium reabsorption in the kidneys. Additionally, ENaC is essential for airway surface liquid homeostasis, which is crucial for proper mucus clearance. This chain is Epithelial sodium channel subunit beta, found in Canis lupus familiaris (Dog).